The sequence spans 371 residues: Queuine tRNA-ribosyltransferase (371 aa).

The active-site Proton acceptor is the aspartate 89. Substrate-binding positions include 89 to 93, aspartate 143, glutamine 185, and glycine 212; that span reads DSGGF. The RNA binding stretch occupies residues 243-249; it reads GVGKPED. Residue aspartate 262 is the Nucleophile of the active site. Residues 267-271 form an RNA binding; important for wobble base 34 recognition region; the sequence is TRNAR. Zn(2+) contacts are provided by cysteine 300, cysteine 302, cysteine 305, and histidine 331.

It belongs to the queuine tRNA-ribosyltransferase family. Homodimer. Within each dimer, one monomer is responsible for RNA recognition and catalysis, while the other monomer binds to the replacement base PreQ1. Zn(2+) serves as cofactor.

The catalysed reaction is 7-aminomethyl-7-carbaguanine + guanosine(34) in tRNA = 7-aminomethyl-7-carbaguanosine(34) in tRNA + guanine. It functions in the pathway tRNA modification; tRNA-queuosine biosynthesis. Functionally, catalyzes the base-exchange of a guanine (G) residue with the queuine precursor 7-aminomethyl-7-deazaguanine (PreQ1) at position 34 (anticodon wobble position) in tRNAs with GU(N) anticodons (tRNA-Asp, -Asn, -His and -Tyr). Catalysis occurs through a double-displacement mechanism. The nucleophile active site attacks the C1' of nucleotide 34 to detach the guanine base from the RNA, forming a covalent enzyme-RNA intermediate. The proton acceptor active site deprotonates the incoming PreQ1, allowing a nucleophilic attack on the C1' of the ribose to form the product. After dissociation, two additional enzymatic reactions on the tRNA convert PreQ1 to queuine (Q), resulting in the hypermodified nucleoside queuosine (7-(((4,5-cis-dihydroxy-2-cyclopenten-1-yl)amino)methyl)-7-deazaguanosine). The sequence is that of Queuine tRNA-ribosyltransferase from Azotobacter vinelandii (strain DJ / ATCC BAA-1303).